A 210-amino-acid chain; its full sequence is Large ribosomal subunit protein uL3 (210 aa).

The disordered stretch occupies residues 122–155; sequence NQKRNNFGRGPMSHGSKNHRAPGSIGAGTTPGRV.

It belongs to the universal ribosomal protein uL3 family. In terms of assembly, part of the 50S ribosomal subunit. Forms a cluster with proteins L14 and L19.

Its function is as follows. One of the primary rRNA binding proteins, it binds directly near the 3'-end of the 23S rRNA, where it nucleates assembly of the 50S subunit. This Nostoc punctiforme (strain ATCC 29133 / PCC 73102) protein is Large ribosomal subunit protein uL3.